A 145-amino-acid polypeptide reads, in one-letter code: RING-H2 finger protein ATL18 (145 aa).

An N-terminal signal peptide occupies residues 1-29 (MISMLFPRSPLCTAAIVFYTCVCIPLGRL). The RING-type; atypical zinc-finger motif lies at 62–105 (CPICLVEFEAEDAVTHLPRCAHLFHINCIEPWLLRGHLTCPLCR). A helical membrane pass occupies residues 125-145 (STLYLSIFFFFCIFLHLLGYL).

Belongs to the RING-type zinc finger family. ATL subfamily.

The protein resides in the membrane. It catalyses the reaction S-ubiquitinyl-[E2 ubiquitin-conjugating enzyme]-L-cysteine + [acceptor protein]-L-lysine = [E2 ubiquitin-conjugating enzyme]-L-cysteine + N(6)-ubiquitinyl-[acceptor protein]-L-lysine.. It functions in the pathway protein modification; protein ubiquitination. The protein is RING-H2 finger protein ATL18 (ATL18) of Arabidopsis thaliana (Mouse-ear cress).